A 205-amino-acid polypeptide reads, in one-letter code: tRNA (pseudouridine(54)-N(1))-methyltransferase (205 aa).

S-adenosyl-L-methionine contacts are provided by residues Leu136, Gly156, 179–184 (LSPLEL), and Cys189.

This sequence belongs to the methyltransferase superfamily. TrmY family. Homodimer.

Its subcellular location is the cytoplasm. It catalyses the reaction pseudouridine(54) in tRNA + S-adenosyl-L-methionine = N(1)-methylpseudouridine(54) in tRNA + S-adenosyl-L-homocysteine + H(+). Functionally, specifically catalyzes the N1-methylation of pseudouridine at position 54 (Psi54) in tRNAs. This is tRNA (pseudouridine(54)-N(1))-methyltransferase from Methanocaldococcus jannaschii (strain ATCC 43067 / DSM 2661 / JAL-1 / JCM 10045 / NBRC 100440) (Methanococcus jannaschii).